Consider the following 283-residue polypeptide: uncharacterized protein (283 aa).

6 helical membrane passes run 28-48 (LSSTSGAIGAIFGIILSILLI), 65-85 (LTSLIVASFGFLIALIIGFIL), 113-133 (LKRGFLYWIGNIILSIIFMIV), 135-155 (ILFIIFGVFLIFLPLVGIVFI), 200-220 (LNYIILLIIVGVIVIVINFVV), and 246-266 (IVDVISAVISAFVGFYTAVFA).

The protein to M.jannaschii MJ0233.

It is found in the cell membrane. This is an uncharacterized protein from Methanocaldococcus jannaschii (strain ATCC 43067 / DSM 2661 / JAL-1 / JCM 10045 / NBRC 100440) (Methanococcus jannaschii).